A 166-amino-acid chain; its full sequence is MFPMVTEFMNYGQQTVRAARYIGQGFMITLSHANRLPVTIQYPYEKLITSERFRGRIHFEFDKCIACEVCVRVCPIDLPVVDWKLETDIRKKRLLNYSIDFGICIFCGNCVEYCPTNCLSMTEEYELSTYDRHELNYNQIALGRLPMSVIDDYTIRTILNLSEIKT.

2 consecutive 4Fe-4S ferredoxin-type domains span residues 55–84 (GRIH…VDWK) and 95–124 (LNYS…MTEE). [4Fe-4S] cluster contacts are provided by C64, C67, C70, C74, C104, C107, C110, and C114.

Belongs to the complex I 23 kDa subunit family. In terms of assembly, NDH is composed of at least 16 different subunits, 5 of which are encoded in the nucleus. [4Fe-4S] cluster is required as a cofactor.

It localises to the plastid. Its subcellular location is the chloroplast thylakoid membrane. The enzyme catalyses a plastoquinone + NADH + (n+1) H(+)(in) = a plastoquinol + NAD(+) + n H(+)(out). It carries out the reaction a plastoquinone + NADPH + (n+1) H(+)(in) = a plastoquinol + NADP(+) + n H(+)(out). In terms of biological role, NDH shuttles electrons from NAD(P)H:plastoquinone, via FMN and iron-sulfur (Fe-S) centers, to quinones in the photosynthetic chain and possibly in a chloroplast respiratory chain. The immediate electron acceptor for the enzyme in this species is believed to be plastoquinone. Couples the redox reaction to proton translocation, and thus conserves the redox energy in a proton gradient. This is NAD(P)H-quinone oxidoreductase subunit I, chloroplastic from Marshallia caespitosa (Barbara's buttons).